The following is a 781-amino-acid chain: DEAD-box ATP-dependent RNA helicase 50 (781 aa).

Disordered stretches follow at residues 72–103 (EFAP…LTAS), 117–148 (GKVT…DEGF), 166–240 (IPRS…KGDR), 254–292 (GRAI…REDR), and 313–342 (YNPR…RGWG). Residues 79-88 (SDLLSSIPSE) show a composition bias toward low complexity. Positions 130 to 143 (EEEDEDDASDENYS) are enriched in acidic residues. Basic and acidic residues predominate over residues 171–197 (KSAERNEVKRASKVRESRESRRDLDRL). Positions 198-208 (EGDDEDVDEVS) are enriched in acidic residues. Residues 216-226 (NQRAGSRSSYS) show a composition bias toward polar residues. Positions 254 to 274 (GRAIDEVSNPRKFNDNERAES) are enriched in basic and acidic residues. Residues 275-286 (RSSYSRDSSANS) show a composition bias toward low complexity. A compositionally biased stretch (basic and acidic residues) spans 313-325 (YNPRRFTDNERGL). A Q motif motif is present at residues 374–402 (KTFAEIGCSEDMMKALKEQNFDRPAHIQA). The 182-residue stretch at 405–586 (FSPVIDGKSC…VEVFPDCEVV (182 aa)) folds into the Helicase ATP-binding domain. ATP is bound at residue 418–425 (DQSGSGKT). The DEAD box motif lies at 533 to 536 (DEVD). One can recognise a Helicase C-terminal domain in the interval 621–781 (NKKTALLQIM…DVPNAYEFTT (161 aa)).

This sequence belongs to the DEAD box helicase family.

It catalyses the reaction ATP + H2O = ADP + phosphate + H(+). In terms of biological role, probably involved in resistance to biotic and abiotic stresses. This chain is DEAD-box ATP-dependent RNA helicase 50 (RH50), found in Arabidopsis thaliana (Mouse-ear cress).